The chain runs to 595 residues: RuBisCO large subunit-binding protein subunit beta, chloroplastic (595 aa).

The transit peptide at Met1–Met49 directs the protein to the chloroplast.

It belongs to the chaperonin (HSP60) family. As to quaternary structure, oligomer of probably six alpha and six beta subunits.

Its subcellular location is the plastid. It is found in the chloroplast. Functionally, this protein binds RuBisCO small and large subunits and is implicated in the assembly of the enzyme oligomer. This chain is RuBisCO large subunit-binding protein subunit beta, chloroplastic, found in Pisum sativum (Garden pea).